Reading from the N-terminus, the 309-residue chain is Oxidoreductase NAD-binding domain-containing protein 1 (309 aa).

An N-terminal signal peptide occupies residues 1–14 (MVVVIPRLLRGSLG). Residues 47–161 (HLERTADVVR…VGGEFFFDPK (115 aa)) form the FAD-binding FR-type domain. Residue 175-180 (GVGINP) participates in NAD(+) binding.

The sequence is that of Oxidoreductase NAD-binding domain-containing protein 1 (OXNAD1) from Bos taurus (Bovine).